The sequence spans 63 residues: Male-specific sperm protein Mst84Da (63 aa).

Belongs to the MST(3)CGP family. In terms of tissue distribution, testis.

This Drosophila melanogaster (Fruit fly) protein is Male-specific sperm protein Mst84Da (Mst84Da).